Here is a 126-residue protein sequence, read N- to C-terminus: Protein C10 (126 aa).

N-acetylalanine is present on A2.

This sequence belongs to the UPF0456 family. Ubiquitously expressed, with higher expression in lung and fetal brain.

It localises to the cytoplasm. In terms of biological role, in brain, may be required for corpus callosum development. The polypeptide is Protein C10 (C12orf57) (Homo sapiens (Human)).